Consider the following 804-residue polypeptide: Leucine--tRNA ligase (804 aa).

The short motif at 39 to 50 (PFPSGKGLHVGH) is the 'HIGH' region element. A 'KMSKS' region motif is present at residues 573–577 (KMSKS). Lys576 serves as a coordination point for ATP.

The protein belongs to the class-I aminoacyl-tRNA synthetase family.

It localises to the cytoplasm. The enzyme catalyses tRNA(Leu) + L-leucine + ATP = L-leucyl-tRNA(Leu) + AMP + diphosphate. This Lactobacillus johnsonii (strain CNCM I-12250 / La1 / NCC 533) protein is Leucine--tRNA ligase.